The following is a 260-amino-acid chain: Methylphosphonate hydroxylase (260 aa).

Lys-107 is a binding site for 2-oxoglutarate. Residues His-117, Asp-119, and His-195 each coordinate Fe cation.

The protein belongs to the PhyH family. Fe(2+) serves as cofactor.

It catalyses the reaction methylphosphonate + 2-oxoglutarate + O2 = hydroxymethylphosphonate + succinate + CO2. Part of an oxidative pathway for utilization of methylphosphonic acid as a phosphate source. Catalyzes the conversion of methylphosphonic acid to hydroxymethylphosphonic acid. Is specific for the hydroxylation of methylphosphonate. This is Methylphosphonate hydroxylase from Gimesia maris (strain ATCC 29201 / DSM 8797 / 534-30) (Planctomyces maris).